The chain runs to 119 residues: Large ribosomal subunit protein bL19 (119 aa).

Belongs to the bacterial ribosomal protein bL19 family.

Its function is as follows. This protein is located at the 30S-50S ribosomal subunit interface and may play a role in the structure and function of the aminoacyl-tRNA binding site. This is Large ribosomal subunit protein bL19 (rplS) from Mycoplasma pneumoniae (strain ATCC 29342 / M129 / Subtype 1) (Mycoplasmoides pneumoniae).